Reading from the N-terminus, the 197-residue chain is Phosphoheptose isomerase (197 aa).

The 163-residue stretch at 34–196 (MVQCLLGGNK…DRTLFPQDEQ (163 aa)) folds into the SIS domain. Residue 49–51 (NGG) coordinates substrate. The Zn(2+) site is built by His58 and Glu62. Substrate contacts are provided by residues Glu62, 91–92 (ND), 117–119 (STS), Ser122, and Gln172. 2 residues coordinate Zn(2+): Gln172 and His180.

The protein belongs to the SIS family. GmhA subfamily. As to quaternary structure, homotetramer. Zn(2+) is required as a cofactor.

It is found in the cytoplasm. It carries out the reaction 2 D-sedoheptulose 7-phosphate = D-glycero-alpha-D-manno-heptose 7-phosphate + D-glycero-beta-D-manno-heptose 7-phosphate. It functions in the pathway carbohydrate biosynthesis; D-glycero-D-manno-heptose 7-phosphate biosynthesis; D-glycero-alpha-D-manno-heptose 7-phosphate and D-glycero-beta-D-manno-heptose 7-phosphate from sedoheptulose 7-phosphate: step 1/1. Catalyzes the isomerization of sedoheptulose 7-phosphate in D-glycero-D-manno-heptose 7-phosphate. This Shewanella frigidimarina (strain NCIMB 400) protein is Phosphoheptose isomerase.